Consider the following 178-residue polypeptide: MSRIGKQPIAIPSGVDVSVENNVLKFKKGNHLKELDTKGHVDVKIENGHIVFAPKGEDRQSRAYWGTYRALANNIVTGITHGFTRQLEINGVGYKAAAKGKILELSLGFSHLINYELPAGVEASVDKNVITIKGDDKQVVGQVAAQVRGFRPPEPYKGKGVKYLEERIIRKAGKTSKK.

Belongs to the universal ribosomal protein uL6 family. Part of the 50S ribosomal subunit.

Its function is as follows. This protein binds to the 23S rRNA, and is important in its secondary structure. It is located near the subunit interface in the base of the L7/L12 stalk, and near the tRNA binding site of the peptidyltransferase center. The sequence is that of Large ribosomal subunit protein uL6 from Campylobacter concisus (strain 13826).